Here is a 76-residue protein sequence, read N- to C-terminus: Omega-scoloptoxin(15)-Ssd3c (76 aa).

The signal sequence occupies residues 1–23; the sequence is MEKKIIFLVVLVALLALPEFISS.

It belongs to the scoloptoxin-15 family. In terms of processing, contains 2 disulfide bonds. Expressed by the venom gland.

It is found in the secreted. In terms of biological role, voltage-gated calcium channel inhibitor (Cav) (8.6% block at 10 nM), when tested on DRG neurons. In Scolopendra dehaani (Thai centipede), this protein is Omega-scoloptoxin(15)-Ssd3c.